Consider the following 257-residue polypeptide: NH(3)-dependent NAD(+) synthetase (257 aa).

40–47 lines the ATP pocket; it reads GISGGIDS. Aspartate 46 contacts Mg(2+). Arginine 121 is a deamido-NAD(+) binding site. ATP is bound at residue threonine 141. Glutamate 146 contacts Mg(2+). Deamido-NAD(+) contacts are provided by lysine 154 and aspartate 161. Positions 170 and 192 each coordinate ATP. Residue 238-239 coordinates deamido-NAD(+); it reads HK.

The protein belongs to the NAD synthetase family. Homodimer.

It carries out the reaction deamido-NAD(+) + NH4(+) + ATP = AMP + diphosphate + NAD(+) + H(+). Its pathway is cofactor biosynthesis; NAD(+) biosynthesis; NAD(+) from deamido-NAD(+) (ammonia route): step 1/1. In terms of biological role, catalyzes the ATP-dependent amidation of deamido-NAD to form NAD. Uses ammonia as a nitrogen source. In Mycoplasmopsis pulmonis (strain UAB CTIP) (Mycoplasma pulmonis), this protein is NH(3)-dependent NAD(+) synthetase.